Consider the following 553-residue polypeptide: Rhodopsin kinase GRK7 (553 aa).

Residue Ser-36 is modified to Phosphoserine; by PKA. The 121-residue stretch at 56 to 176 (FHSLCEQQPI…VTSAFYDKFL (121 aa)) folds into the RGS domain. Positions 191-454 (FTEFRVLGKG…SDDPRKHHFF (264 aa)) constitute a Protein kinase domain. ATP-binding positions include 197-205 (LGKGGFGEV) and Lys-220. Asp-316 (proton acceptor) is an active-site residue. An AGC-kinase C-terminal domain is found at 455-520 (KTINFPRLEA…GAVPIAWQEE (66 aa)). Position 550 is a cysteine methyl ester (Cys-550). The S-geranylgeranyl cysteine moiety is linked to residue Cys-550. Positions 551–553 (LLL) are cleaved as a propeptide — removed in mature form.

Belongs to the protein kinase superfamily. AGC Ser/Thr protein kinase family. GPRK subfamily. Interacts (when prenylated) with PDE6D; this promotes release from membranes. In terms of processing, autophosphorylated in vitro at Ser-490. Phosphorylation at Ser-36 is regulated by light and activated by cAMP. In terms of tissue distribution, retinal cones, outer and inner segments.

It is found in the membrane. It carries out the reaction L-threonyl-[rhodopsin] + ATP = O-phospho-L-threonyl-[rhodopsin] + ADP + H(+). The enzyme catalyses L-seryl-[rhodopsin] + ATP = O-phospho-L-seryl-[rhodopsin] + ADP + H(+). Its activity is regulated as follows. Inhibited by phosphorylation of Ser-36. Functionally, retina-specific kinase involved in the shutoff of the photoresponse and adaptation to changing light conditions via cone opsin phosphorylation, including rhodopsin (RHO). The sequence is that of Rhodopsin kinase GRK7 (GRK7) from Homo sapiens (Human).